Here is a 341-residue protein sequence, read N- to C-terminus: Glycerol-3-phosphate dehydrogenase [NAD(P)+] (341 aa).

Ser14, Phe15, Arg35, and Lys108 together coordinate NADPH. The sn-glycerol 3-phosphate site is built by Lys108 and Gly136. Ala140 contributes to the NADPH binding site. The sn-glycerol 3-phosphate site is built by Lys191, Asp244, Ser254, Arg255, and Asn256. Lys191 acts as the Proton acceptor in catalysis. NADPH is bound at residue Arg255. Positions 279 and 281 each coordinate NADPH.

It belongs to the NAD-dependent glycerol-3-phosphate dehydrogenase family.

The protein resides in the cytoplasm. The catalysed reaction is sn-glycerol 3-phosphate + NAD(+) = dihydroxyacetone phosphate + NADH + H(+). It catalyses the reaction sn-glycerol 3-phosphate + NADP(+) = dihydroxyacetone phosphate + NADPH + H(+). It functions in the pathway membrane lipid metabolism; glycerophospholipid metabolism. Its function is as follows. Catalyzes the reduction of the glycolytic intermediate dihydroxyacetone phosphate (DHAP) to sn-glycerol 3-phosphate (G3P), the key precursor for phospholipid synthesis. The polypeptide is Glycerol-3-phosphate dehydrogenase [NAD(P)+] (Pseudomonas putida (strain ATCC 700007 / DSM 6899 / JCM 31910 / BCRC 17059 / LMG 24140 / F1)).